We begin with the raw amino-acid sequence, 368 residues long: Glutamate 5-kinase 1 (368 aa).

Residue Lys-12 participates in ATP binding. The substrate site is built by Ser-52, Asp-135, and Asn-147. ATP-binding positions include 167–168 (SD) and 209–215 (TGGMKTK). Residues 274 to 348 (QGEVVVDGSF…DNEQSEFSEK (75 aa)) enclose the PUA domain.

Belongs to the glutamate 5-kinase family.

It is found in the cytoplasm. The catalysed reaction is L-glutamate + ATP = L-glutamyl 5-phosphate + ADP. It participates in amino-acid biosynthesis; L-proline biosynthesis; L-glutamate 5-semialdehyde from L-glutamate: step 1/2. Functionally, catalyzes the transfer of a phosphate group to glutamate to form L-glutamate 5-phosphate. The polypeptide is Glutamate 5-kinase 1 (Pseudoalteromonas translucida (strain TAC 125)).